A 236-amino-acid polypeptide reads, in one-letter code: 2-C-methyl-D-erythritol 4-phosphate cytidylyltransferase (236 aa).

The protein belongs to the IspD/TarI cytidylyltransferase family. IspD subfamily. Homodimer.

The enzyme catalyses 2-C-methyl-D-erythritol 4-phosphate + CTP + H(+) = 4-CDP-2-C-methyl-D-erythritol + diphosphate. Its pathway is isoprenoid biosynthesis; isopentenyl diphosphate biosynthesis via DXP pathway; isopentenyl diphosphate from 1-deoxy-D-xylulose 5-phosphate: step 2/6. Its function is as follows. Catalyzes the formation of 4-diphosphocytidyl-2-C-methyl-D-erythritol from CTP and 2-C-methyl-D-erythritol 4-phosphate (MEP). The protein is 2-C-methyl-D-erythritol 4-phosphate cytidylyltransferase of Klebsiella pneumoniae subsp. pneumoniae (strain ATCC 700721 / MGH 78578).